Here is a 137-residue protein sequence, read N- to C-terminus: MLQPKRTKFRKQMTGHNRGLALRGSKVSFGEFALKSVARGRLTARQIESARRALTRHVKRGGKIWIRVFPDKPISKKPLEVRMGKGKGNVEYWVAQIQPGKVLYEIEGVSEELAREAFALAAAKLPLATSFVKRTVM.

It belongs to the universal ribosomal protein uL16 family. In terms of assembly, part of the 50S ribosomal subunit.

Its function is as follows. Binds 23S rRNA and is also seen to make contacts with the A and possibly P site tRNAs. In Pseudomonas fluorescens (strain Pf0-1), this protein is Large ribosomal subunit protein uL16.